The following is a 98-amino-acid chain: DNA-binding protein Fis (98 aa).

The H-T-H motif DNA-binding region spans 74–93 (QTRAATMLGINRGTLRKKLK).

Belongs to the transcriptional regulatory Fis family. As to quaternary structure, homodimer.

In terms of biological role, activates ribosomal RNA transcription. Plays a direct role in upstream activation of rRNA promoters. The sequence is that of DNA-binding protein Fis from Mannheimia haemolytica (Pasteurella haemolytica).